We begin with the raw amino-acid sequence, 278 residues long: MRSIWGLIVLVAAATFYLYLLSAFLPPGPRAIRVHDTGPEHTDDEPEEKVLRLKFPSDLEELRELAELLKFYKTEHTGYVFILFCSAYLYKQSFAIPGSSFLNMLSGALFGPLHGLIIACTLTTVGSTNCYLLSRTFGKRHIVRLFPEKVAMLQRMVEENRSSLFFFLLFLRFFPMTPNWFLNVTSPILNIPIPIFFFSILIGLIPYNFICVHTGAVLSEINSLDDIFSWFTLLQLLLIACVALLPGALIRRYSKDHLKLHGLEPNGHQKILNDRKTR.

The signal sequence occupies residues 1–23; the sequence is MRSIWGLIVLVAAATFYLYLLSA. 5 consecutive transmembrane segments (helical) span residues 78 to 98, 101 to 121, 164 to 184, 191 to 211, and 230 to 250; these read GYVF…AIPG, FLNM…IACT, LFFF…FLNV, IPIP…NFIC, and WFTL…GALI.

It belongs to the TMEM41 family.

The protein localises to the membrane. The protein is Transmembrane protein 41A-B of Danio rerio (Zebrafish).